The primary structure comprises 329 residues: Acetyl-coenzyme A carboxylase carboxyl transferase subunit alpha (329 aa).

Residues 40-294 (QLETLAARRR…KESLIRNLRE (255 aa)) enclose the CoA carboxyltransferase C-terminal domain.

It belongs to the AccA family. Acetyl-CoA carboxylase is a heterohexamer composed of biotin carboxyl carrier protein (AccB), biotin carboxylase (AccC) and two subunits each of ACCase subunit alpha (AccA) and ACCase subunit beta (AccD).

The protein resides in the cytoplasm. The catalysed reaction is N(6)-carboxybiotinyl-L-lysyl-[protein] + acetyl-CoA = N(6)-biotinyl-L-lysyl-[protein] + malonyl-CoA. The protein operates within lipid metabolism; malonyl-CoA biosynthesis; malonyl-CoA from acetyl-CoA: step 1/1. Its function is as follows. Component of the acetyl coenzyme A carboxylase (ACC) complex. First, biotin carboxylase catalyzes the carboxylation of biotin on its carrier protein (BCCP) and then the CO(2) group is transferred by the carboxyltransferase to acetyl-CoA to form malonyl-CoA. In Prochlorococcus marinus (strain MIT 9211), this protein is Acetyl-coenzyme A carboxylase carboxyl transferase subunit alpha.